The following is a 171-amino-acid chain: Adenine phosphoribosyltransferase (171 aa).

The protein belongs to the purine/pyrimidine phosphoribosyltransferase family. Homodimer.

It is found in the cytoplasm. The catalysed reaction is AMP + diphosphate = 5-phospho-alpha-D-ribose 1-diphosphate + adenine. It functions in the pathway purine metabolism; AMP biosynthesis via salvage pathway; AMP from adenine: step 1/1. Functionally, catalyzes a salvage reaction resulting in the formation of AMP, that is energically less costly than de novo synthesis. The protein is Adenine phosphoribosyltransferase of Nitrosococcus oceani (strain ATCC 19707 / BCRC 17464 / JCM 30415 / NCIMB 11848 / C-107).